The sequence spans 1548 residues: Dual oxidase 2 (1548 aa).

The N-terminal stretch at 1–25 is a signal peptide; sequence MLRARPEALMLLGALLTGSLGPSGN. Residues 26-601 lie on the Extracellular side of the membrane; that stretch reads QDALSLPWEV…EGSSPGFAIT (576 aa). The interval 30 to 596 is peroxidase-like; mediates peroxidase activity; sequence SLPWEVQRYD…VLDFFEGSSP (567 aa). 5 N-linked (GlcNAc...) asparagine glycosylation sites follow: N100, N348, N382, N455, and N537. The cysteines at positions 124 and 1162 are disulfide-linked. A helical transmembrane segment spans residues 602–622; it reads IIALCCLPLVSLLLSGVVAYF. Residues 623-1041 lie on the Cytoplasmic side of the membrane; that stretch reads RGREHKKLQK…KRFVENYRRH (419 aa). EF-hand domains lie at 819 to 854, 855 to 890, and 899 to 934; these read PQDM…FMKG, SPED…FIEI, and QLAE…HDSE. Residues D832, D834, N836, Y838, E843, D868, D870, N872, and E879 each coordinate Ca(2+). Positions 960 to 1245 are interaction with TXNDC11; that stretch reads ISCRVSFITR…GSYALIQLPT (286 aa). Residues 971–991 form a disordered region; the sequence is PGERSHPQGLGPPAPEAPELG. A helical membrane pass occupies residues 1042–1062; that stretch reads IVCVAIFSAICVGVFADRAYY. The Extracellular segment spans residues 1063–1076; that stretch reads YGFASPPSDIAQTT. Residues 1077 to 1097 traverse the membrane as a helical segment; the sequence is LVGIILSRGTAASVSFMFSYI. The Ferric oxidoreductase domain maps to 1084–1266; sequence RGTAASVSFM…YGGDKLVSLS (183 aa). The Cytoplasmic portion of the chain corresponds to 1098-1128; sequence LLTMCRNLITFLRETFLNRYVPFDAAVDFHR. A helical membrane pass occupies residues 1129 to 1151; sequence WIAMAAVVLAILHSAGHAVNVYI. The Extracellular segment spans residues 1152-1185; it reads FSVSPLSLLACIFPNVFVNDGSKLPQKFYWWFFQ. Residues 1186 to 1206 traverse the membrane as a helical segment; sequence TVPGMTGVLLLLVLAIMYVFA. The Cytoplasmic segment spans residues 1207-1223; sequence SHHFRRRSFRGFWLTHH. Transmembrane regions (helical) follow at residues 1224-1244 and 1245-1265; these read LYIL…IQLP and TFHI…LVSL. The Cytoplasmic segment spans residues 1266-1548; sequence SRKKVEISVV…AHFMHHYENF (283 aa). One can recognise an FAD-binding FR-type domain in the interval 1267-1373; it reads RKKVEISVVK…DGPFGEGHQE (107 aa).

In the N-terminal section; belongs to the peroxidase family. Heterodimer with DUOXA2; disulfide-linked. Interacts with TXNDC11, TPO and CYBA. In terms of processing, N-glycosylated. In terms of tissue distribution, expressed in colon, small intestine, duodenum and tracheal surface epithelial cells (at protein level). Expressed in thyrocytes. Also detected in kidney, liver, lung, pancreas, prostate, salivary glands, rectum and testis.

Its subcellular location is the apical cell membrane. The protein localises to the cell junction. It catalyses the reaction NADH + O2 + H(+) = H2O2 + NAD(+). The catalysed reaction is NADPH + O2 + H(+) = H2O2 + NADP(+). The protein operates within hormone biosynthesis; thyroid hormone biosynthesis. With respect to regulation, peroxidase activity is inhibited by aminobenzohydrazide. The NADPH oxidase activity is calcium-dependent. In terms of biological role, generates hydrogen peroxide which is required for the activity of thyroid peroxidase/TPO and lactoperoxidase/LPO. Plays a role in thyroid hormones synthesis and lactoperoxidase-mediated antimicrobial defense at the surface of mucosa. May have its own peroxidase activity through its N-terminal peroxidase-like domain. The protein is Dual oxidase 2 (DUOX2) of Homo sapiens (Human).